Reading from the N-terminus, the 757-residue chain is MFKIIKKSIEWGGRALSLETGKIARQAHGSVVVNYGDTSVLVTVVRKKKEESVDFLPLNVQFIAKSYAMGKIPGGFFKREGKPSDRETLISRVIDRSIRPLFPEGFHDEISVVCNLLTYDTVNPPEVPALIGAVAALAISGVPFHFTIAGVMVGCDENNNYILNPSVQEMKASSLDLFLSGDENSILMVESEVKELSEENVFNAIKFGHEHLKPVIKLIKEFADTIGNKPESFAPIDASDITQELEKYGKDFEKAYSQTVKQERVQALEAIRENILNTLKETGKDEKLITYAVKNFERSLVREIIRKKSVRIDGRKHDEIRQIEVEVDILSKTHGSALFTRGNTQALVVTALGTTQDEQIVDDIEGDRREHFMLHYNFPSFAVGETSAARAPGRREIGHGKLAWKAIHPVLPDKSEFPYTIRVVSEILESDGSSSMATVCGTSLALMDTGVPIKAPVAGIAMGLIKDKDEYVILSDILGDEDYLGDMDFKVAGTSEGVTALQMDMKISGISFEIVEKSLEQAKAGRLHILEKMNAVISEHSDDVKDHAPRMLSFYIDKDKISAAIGSKGKNIRSVCERSNAKIEIGDDGKVSVFATSGTEAEIAKSMMIDSITELEQGSIVDVKVVRIEKSIVELEFLNGRKGKMHISEVANEHIDSIESVLKQDDTFKALVIDFEKGGCPKLSRRRVDQETGEFFEGELYNEERKDGPNDRDNYYNNSFSRKPGGSHHKRPPRPHSGFSNRNRPKFGNNDSSSGFY.

Residues Asp482 and Asp488 each coordinate Mg(2+). The region spanning 549-608 is the KH domain; sequence PRMLSFYIDKDKISAAIGSKGKNIRSVCERSNAKIEIGDDGKVSVFATSGTEAEIAKSMM. One can recognise an S1 motif domain in the interval 618–686; it reads GSIVDVKVVR…KGGCPKLSRR (69 aa). Positions 698 to 757 are disordered; it reads GELYNEERKDGPNDRDNYYNNSFSRKPGGSHHKRPPRPHSGFSNRNRPKFGNNDSSSGFY. A compositionally biased stretch (basic and acidic residues) spans 702–714; sequence NEERKDGPNDRDN. The segment covering 725-734 has biased composition (basic residues); it reads GGSHHKRPPR.

The protein belongs to the polyribonucleotide nucleotidyltransferase family. Mg(2+) serves as cofactor.

It localises to the cytoplasm. It catalyses the reaction RNA(n+1) + phosphate = RNA(n) + a ribonucleoside 5'-diphosphate. In terms of biological role, involved in mRNA degradation. Catalyzes the phosphorolysis of single-stranded polyribonucleotides processively in the 3'- to 5'-direction. This Wolbachia pipientis wMel protein is Polyribonucleotide nucleotidyltransferase.